The chain runs to 342 residues: Ribosomal RNA small subunit methyltransferase C (342 aa).

The protein belongs to the methyltransferase superfamily. RsmC family. Monomer.

Its subcellular location is the cytoplasm. It carries out the reaction guanosine(1207) in 16S rRNA + S-adenosyl-L-methionine = N(2)-methylguanosine(1207) in 16S rRNA + S-adenosyl-L-homocysteine + H(+). Its function is as follows. Specifically methylates the guanine in position 1207 of 16S rRNA in the 30S particle. The sequence is that of Ribosomal RNA small subunit methyltransferase C from Enterobacter sp. (strain 638).